The primary structure comprises 317 residues: Large ribosomal subunit protein uL10 (317 aa).

The span at Ser280–Ala290 shows a compositional bias: low complexity. The tract at residues Ser280–Asp317 is disordered. A compositionally biased stretch (basic and acidic residues) spans Thr291–Ser302. The residue at position 302 (Ser302) is a Phosphoserine. Ser304 carries the phosphoserine; by CK1 modification.

The protein belongs to the universal ribosomal protein uL10 family. In terms of assembly, P0 forms a pentameric complex by interaction with dimers of P1 and P2.

The protein localises to the cytoplasm. It is found in the nucleus. Ribosomal protein P0 is the functional equivalent of E.coli protein L10. This is Large ribosomal subunit protein uL10 (RpLP0) from Drosophila melanogaster (Fruit fly).